The following is an 89-amino-acid chain: MKAVFAILFLAFIALTYAKSYDEVKEEIKNEVEREIFEDLEEESDELDNYVEESNDAKPWRRWRRAVRRIRWRKVVPYIPAIVRAAGKK.

Residues 1–18 (MKAVFAILFLAFIALTYA) form the signal peptide. Positions 19–57 (KSYDEVKEEIKNEVEREIFEDLEEESDELDNYVEESNDA) are excised as a propeptide. Alanine amide is present on alanine 86.

Belongs to the arminin family. In terms of tissue distribution, expressed in entodermal epithelium along the body column.

The protein localises to the secreted. It is found in the target cell membrane. Antimicrobial peptide with a broad-spectrum antimicrobial activity. Keeps its antibacterial activity under a wide range of salt concentrations that mimic physiological conditions of human blood, which is surprising, since Hydra is an obligate freshwater animal with nearly no salt tolerance. Does not affect red blood cells. The protein is Arminin 375 of Hydra oligactis (Brown hydra).